The following is a 768-amino-acid chain: Kelch domain-containing protein 7A (768 aa).

Residues 12–29 traverse the membrane as a helical segment; the sequence is VVLSAAALLLVTVAYRLY. A disordered region spans residues 35–210; sequence PAQRWGGNAQ…PAPLQGSSDM (176 aa). At S77 the chain carries Phosphoserine. Over residues 104–118 the composition is skewed to basic and acidic residues; it reads TDRKSQRKGSGEERG. N-linked (GlcNAc...) asparagine glycosylation occurs at N248. Residues 304–352 form a disordered region; that stretch reads LTEVPSPRPPPRSLGTGAASGGQAGDTKGAAERAASPQPGPSPSTRGFS. One copy of the Kelch 1 repeat lies at 319 to 365; the sequence is TGAASGGQAGDTKGAAERAASPQPGPSPSTRGFSRKESLLQIAENPE. At S356 the chain carries Phosphoserine. The segment at 371–395 is disordered; the sequence is DGFWLPAPPCPDPGALPGSGRSSQE. Kelch repeat units follow at residues 483–529, 532–580, 581–623, and 626–668; these read QYLV…ICSL, YLFV…ALDG, HLYA…ATAC, and EIFV…AVNG.

It is found in the membrane. This Pongo abelii (Sumatran orangutan) protein is Kelch domain-containing protein 7A (KLHDC7A).